A 132-amino-acid polypeptide reads, in one-letter code: ALYNVENQWGGSSAPWNEGGQWEIGSRSDQNVVAINVESGDDGQTLNGTMTYAGEGPIGFRATLLGNNSYEVENQWGGDSAPWHSGGNWILGSRENQNVVAINVESGDDGQTLNGTMTYAGEGPIGFKGTTL.

Tandem repeats lie at residues 1–66 (ALYN…TLLG) and 67–132 (NNSY…GTTL). A 2 X approximate tandem repeats region spans residues 1-132 (ALYNVENQWG…GPIGFKGTTL (132 aa)).

Monomer.

Lectin specific for high mannose N-glycans, recognizes the branched moiety of these glycans. Does not recognize other types of N-glycans or monosaccharides. Agglutinates trypsin-treated rabbit erythrocytes. Does not require divalent cations for activity. Inhibits HIV replication in MT4 cells with an EC(50) of 45 nM. Binds to the HIV envelope glycoprotein gp120. The polypeptide is Lectin OAA (Planktothrix agardhii (Oscillatoria agardhii)).